The primary structure comprises 60 residues: Cytotoxin 1 (60 aa).

4 disulfides stabilise this stretch: Cys3–Cys21, Cys14–Cys38, Cys42–Cys53, and Cys54–Cys59.

The protein belongs to the three-finger toxin family. Short-chain subfamily. Type IA cytotoxin sub-subfamily. In terms of assembly, monomer in solution; Homodimer and oligomer in the presence of negatively charged lipids forming a pore with a size ranging between 20 and 30 Angstroms. Expressed by the venom gland.

Its subcellular location is the secreted. The protein localises to the target cell membrane. Functionally, shows cytolytic activity on many different cells by forming pore in lipid membranes. In vivo, increases heart rate or kills the animal by cardiac arrest. In addition, it binds to heparin with high affinity, interacts with Kv channel-interacting protein 1 (KCNIP1) in a calcium-independent manner, and binds to integrin alpha-V/beta-3 (ITGAV/ITGB3) with moderate affinity. This is Cytotoxin 1 from Naja naja (Indian cobra).